Consider the following 154-residue polypeptide: Histone H2B type F-M (154 aa).

The segment covering 1 to 18 (MAAASAMAEASSETTSEE) has biased composition (low complexity). A disordered region spans residues 1–61 (MAAASAMAEA…RGDSFGDSFT (61 aa)). The segment covering 34-50 (QKQKRRGCRGSRRRHAN) has biased composition (basic residues).

It belongs to the histone H2B family. In terms of assembly, the nucleosome is a histone octamer containing two molecules each of H2A, H2B, H3 and H4 assembled in one H3-H4 heterotetramer and two H2A-H2B heterodimers. The octamer wraps approximately 147 bp of DNA.

The protein resides in the nucleus. The protein localises to the chromosome. Core component of nucleosome. Nucleosomes wrap and compact DNA into chromatin, limiting DNA accessibility to the cellular machineries which require DNA as a template. Histones thereby play a central role in transcription regulation, DNA repair, DNA replication and chromosomal stability. DNA accessibility is regulated via a complex set of post-translational modifications of histones, also called histone code, and nucleosome remodeling. This Homo sapiens (Human) protein is Histone H2B type F-M.